A 574-amino-acid polypeptide reads, in one-letter code: Proline--tRNA ligase (574 aa).

Belongs to the class-II aminoacyl-tRNA synthetase family. ProS type 1 subfamily. In terms of assembly, homodimer.

It is found in the cytoplasm. The enzyme catalyses tRNA(Pro) + L-proline + ATP = L-prolyl-tRNA(Pro) + AMP + diphosphate. Its function is as follows. Catalyzes the attachment of proline to tRNA(Pro) in a two-step reaction: proline is first activated by ATP to form Pro-AMP and then transferred to the acceptor end of tRNA(Pro). As ProRS can inadvertently accommodate and process non-cognate amino acids such as alanine and cysteine, to avoid such errors it has two additional distinct editing activities against alanine. One activity is designated as 'pretransfer' editing and involves the tRNA(Pro)-independent hydrolysis of activated Ala-AMP. The other activity is designated 'posttransfer' editing and involves deacylation of mischarged Ala-tRNA(Pro). The misacylated Cys-tRNA(Pro) is not edited by ProRS. This chain is Proline--tRNA ligase, found in Ralstonia nicotianae (strain ATCC BAA-1114 / GMI1000) (Ralstonia solanacearum).